Here is a 652-residue protein sequence, read N- to C-terminus: MSEPLLHLTGISRSFTAGDREFLALKHIDLSIQAGEMVAITGASGSGKSTLMNILGCLDYATAGSYKVNGRETRDLDDQALAELRRDYFGFIFQRYHLLPHLSAMHNVEMPAIYAGTPQVRRHGRARELLARLGLSGHLGHRPSQLSGGQQQRVSIARALMNGGEVILADEPTGALDTASGKEVMNILQELHGLGHTVIIVTHDPKVAANAQRIIEVRDGEIVSDRANPRPADEAPSEPPVSVRPAGARRLVASLGLFKEAFVMAWVALVSHRMRTLLTMLGIVIGITSVVSIVAIGEGAKRYVLKDIQAIGSNTIDIFPGASFGDSRAAAIQTLMPADVTALNQLYYVDSATPMVGRSLLLRYGNIDLNATVNGVSHLYFQVRDIKLASGISFSENDARRQAQVVVIDHNTRNRLFGPDVDPLGQVILVGNLPCTVIGVTRENKNMFAASNLLNVWLPYETAAGRVLGQRHLDSISVRIKDGQPSKVVEEHVKKLMEQRHGTKDFFTNNLDSIMQTVQRTSRSLALLLSLIAVISLVVGGIGVMNIMLVSVTERTREIGIRMAVGARQSDIRQQFLVEAVMVCLIGGAIGISLSFAIGYLFTLFIKEWEMVFSMGSIITAFACSTLIGIVFGFVPARNAARLDPIEALARD.

In terms of domain architecture, ABC transporter spans 6–244 (LHLTGISRSF…APSEPPVSVR (239 aa)). Residue 42 to 49 (GASGSGKS) coordinates ATP. 5 consecutive transmembrane segments (helical) span residues 251 to 271 (LVAS…ALVS), 277 to 297 (LLTM…VAIG), 525 to 545 (LALL…IGVM), 586 to 606 (IGGA…TLFI), and 615 to 635 (MGSI…FGFV).

This sequence belongs to the ABC transporter superfamily. Macrolide exporter (TC 3.A.1.122) family. As to quaternary structure, probably part of a tripartite efflux system, which is composed of an inner membrane transporter, a periplasmic membrane fusion protein, and an outer membrane component.

The protein resides in the cell inner membrane. In terms of biological role, probably part of a tripartite efflux system. This is Probable export ATP-binding/permease protein PFL_2149 from Pseudomonas fluorescens (strain ATCC BAA-477 / NRRL B-23932 / Pf-5).